The following is a 499-amino-acid chain: Hepatic triacylglycerol lipase (499 aa).

The first 21 residues, 1–21 (MGSPLCVPIFLAVCILIQSST), serve as a signal peptide directing secretion. N-linked (GlcNAc...) asparagine glycosylation is present at asparagine 78. Serine 168 functions as the Nucleophile in the catalytic mechanism. The Charge relay system role is filled by aspartate 194. The essential for determining substrate specificity stretch occupies residues 254–277 (CHFLELYKHIAQHGLNALSQTIKC). The active-site Charge relay system is histidine 279. The 135-residue stretch at 352–486 (YHYQFKIQFI…HPTQEKNFVR (135 aa)) folds into the PLAT domain. A glycan (N-linked (GlcNAc...) asparagine) is linked at asparagine 397.

The protein belongs to the AB hydrolase superfamily. Lipase family. Homodimer.

It is found in the secreted. It catalyses the reaction a triacylglycerol + H2O = a diacylglycerol + a fatty acid + H(+). It carries out the reaction a 1-acyl-sn-glycero-3-phosphocholine + H2O = sn-glycerol 3-phosphocholine + a fatty acid + H(+). The enzyme catalyses a 1,2-diacyl-sn-glycero-3-phosphocholine + H2O = a 2-acyl-sn-glycero-3-phosphocholine + a fatty acid + H(+). The catalysed reaction is 1,2,3-tri-(9Z-octadecenoyl)-glycerol + H2O = di-(9Z)-octadecenoylglycerol + (9Z)-octadecenoate + H(+). It catalyses the reaction 1,2-di-(9Z-octadecenoyl)-sn-glycero-3-phosphocholine + H2O = (9Z-octadecenoyl)-sn-glycero-3-phosphocholine + (9Z)-octadecenoate + H(+). It carries out the reaction 1,2,3-tributanoylglycerol + H2O = dibutanoylglycerol + butanoate + H(+). The enzyme catalyses 1,2-dihexadecanoyl-sn-glycero-3-phosphocholine + H2O = hexadecanoyl-sn-glycero-3-phosphocholine + hexadecanoate + H(+). The catalysed reaction is 1,2-di-(9Z-octadecenoyl)-sn-glycerol + H2O = 2-(9Z-octadecenoyl)-glycerol + (9Z)-octadecenoate + H(+). It catalyses the reaction 1,2,3-tri-(9Z-octadecenoyl)-glycerol + H2O = 2,3-di-(9Z)-octadecenoyl-sn-glycerol + (9Z)-octadecenoate + H(+). It carries out the reaction 1-(9Z-octadecenoyl)-sn-glycero-3-phospho-L-serine + H2O = sn-glycero-3-phospho-L-serine + (9Z)-octadecenoate + H(+). The enzyme catalyses 1-hexadecanoyl-sn-glycero-3-phosphocholine + H2O = sn-glycerol 3-phosphocholine + hexadecanoate + H(+). The catalysed reaction is 1,3-di-(9Z-octadecenoyl)-glycerol + H2O = 3-(9Z-octadecenoyl)-sn-glycerol + (9Z)-octadecenoate + H(+). In terms of biological role, catalyzes the hydrolysis of triglycerides and phospholipids present in circulating plasma lipoproteins, including chylomicrons, intermediate density lipoproteins (IDL), low density lipoproteins (LDL) of large size and high density lipoproteins (HDL), releasing free fatty acids (FFA) and smaller lipoprotein particles. Also exhibits lysophospholipase activity. Can hydrolyze both neutral lipid and phospholipid substrates but shows a greater binding affinity for neutral lipid substrates than phospholipid substrates. In native LDL, preferentially hydrolyzes the phosphatidylcholine species containing polyunsaturated fatty acids at sn-2 position. The protein is Hepatic triacylglycerol lipase (LIPC) of Oryctolagus cuniculus (Rabbit).